Reading from the N-terminus, the 121-residue chain is Thioredoxin-like protein (121 aa).

Residues 2–112 (VHHITSNDEL…LGAAAEKLGG (111 aa)) enclose the Thioredoxin domain. Residues cysteine 30 and cysteine 33 are joined by a disulfide bond.

Belongs to the thioredoxin family.

Participates in various redox reactions through the reversible oxidation of its active center dithiol to a disulfide and catalyzes dithiol-disulfide exchange reactions. In Fusarium culmorum, this protein is Thioredoxin-like protein.